The sequence spans 418 residues: Cyclin-dependent kinase 15 (418 aa).

One can recognise a Protein kinase domain in the interval 84–369 (YLNLEKLGEG…AQDALLHPYF (286 aa)). Residues 90–98 (LGEGTYATV) and lysine 113 each bind ATP. The active-site Proton acceptor is aspartate 205.

The protein belongs to the protein kinase superfamily. CMGC Ser/Thr protein kinase family. CDC2/CDKX subfamily. The cofactor is Mg(2+).

It carries out the reaction L-seryl-[protein] + ATP = O-phospho-L-seryl-[protein] + ADP + H(+). The catalysed reaction is L-threonyl-[protein] + ATP = O-phospho-L-threonyl-[protein] + ADP + H(+). Serine/threonine-protein kinase involved in the control of the eukaryotic cell cycle, whose activity is controlled by an associated cyclin. This Danio rerio (Zebrafish) protein is Cyclin-dependent kinase 15 (cdk15).